We begin with the raw amino-acid sequence, 169 residues long: Calcium-binding protein G (169 aa).

EF-hand domains follow at residues 9–44 (KIFQ…KMNG), 60–83 (VDMD…QAKK), 92–127 (AALA…QGYN), and 133–162 (DYVL…KRLA). Ca(2+) is bound by residues D105, D107, D109, K111, E116, D140, D142, D144, Y146, and E151.

This Dictyostelium discoideum (Social amoeba) protein is Calcium-binding protein G (cbpG).